Reading from the N-terminus, the 107-residue chain is IQ domain-containing protein F6 (107 aa).

In terms of domain architecture, IQ spans 42–71 (QEWAVVKVQAQVRMWQARRRFLQARQAACI).

The chain is IQ domain-containing protein F6 (IQCF6) from Homo sapiens (Human).